Reading from the N-terminus, the 186-residue chain is Cell division protein SepF (186 aa).

The interval 24–91 (EDEEEEERYA…HNPPHLRAVP (68 aa)) is disordered.

It belongs to the SepF family. In terms of assembly, homodimer. Interacts with FtsZ.

The protein localises to the cytoplasm. In terms of biological role, cell division protein that is part of the divisome complex and is recruited early to the Z-ring. Probably stimulates Z-ring formation, perhaps through the cross-linking of FtsZ protofilaments. Its function overlaps with FtsA. The chain is Cell division protein SepF from Rubrobacter xylanophilus (strain DSM 9941 / JCM 11954 / NBRC 16129 / PRD-1).